A 474-amino-acid polypeptide reads, in one-letter code: tRNA-2-methylthio-N(6)-dimethylallyladenosine synthase (474 aa).

The MTTase N-terminal domain occupies 3 to 120; the sequence is KKLHIKTWGC…LPEMINSVRG (118 aa). Positions 12, 49, 83, 157, 161, and 164 each coordinate [4Fe-4S] cluster. A Radical SAM core domain is found at 143 to 375; it reads RAEGPTAFVS…QERINQQAMA (233 aa). Residues 378 to 441 form the TRAM domain; it reads RRMLGTTQRI…PNSLRGKVVR (64 aa).

The protein belongs to the methylthiotransferase family. MiaB subfamily. Monomer. [4Fe-4S] cluster serves as cofactor.

It localises to the cytoplasm. The catalysed reaction is N(6)-dimethylallyladenosine(37) in tRNA + (sulfur carrier)-SH + AH2 + 2 S-adenosyl-L-methionine = 2-methylsulfanyl-N(6)-dimethylallyladenosine(37) in tRNA + (sulfur carrier)-H + 5'-deoxyadenosine + L-methionine + A + S-adenosyl-L-homocysteine + 2 H(+). In terms of biological role, catalyzes the methylthiolation of N6-(dimethylallyl)adenosine (i(6)A), leading to the formation of 2-methylthio-N6-(dimethylallyl)adenosine (ms(2)i(6)A) at position 37 in tRNAs that read codons beginning with uridine. The sequence is that of tRNA-2-methylthio-N(6)-dimethylallyladenosine synthase from Salmonella enteritidis PT4 (strain P125109).